Here is a 205-residue protein sequence, read N- to C-terminus: ATP-dependent dethiobiotin synthetase BioD (205 aa).

Thr-16 contacts Mg(2+). Lys-32 is an active-site residue. Residue Thr-36 participates in substrate binding. Position 97 (Glu-97) interacts with Mg(2+). 97–100 (EGAG) provides a ligand contact to ATP.

Belongs to the dethiobiotin synthetase family. As to quaternary structure, homodimer. Requires Mg(2+) as cofactor.

It localises to the cytoplasm. The catalysed reaction is (7R,8S)-7,8-diammoniononanoate + CO2 + ATP = (4R,5S)-dethiobiotin + ADP + phosphate + 3 H(+). It functions in the pathway cofactor biosynthesis; biotin biosynthesis; biotin from 7,8-diaminononanoate: step 1/2. In terms of biological role, catalyzes a mechanistically unusual reaction, the ATP-dependent insertion of CO2 between the N7 and N8 nitrogen atoms of 7,8-diaminopelargonic acid (DAPA, also called 7,8-diammoniononanoate) to form a ureido ring. This chain is ATP-dependent dethiobiotin synthetase BioD, found in Paramagnetospirillum magneticum (strain ATCC 700264 / AMB-1) (Magnetospirillum magneticum).